A 256-amino-acid chain; its full sequence is Homeobox-leucine zipper protein HOX18 (256 aa).

The tract at residues 52 to 116 (YDHGRDEEQA…GGGGGGTRKK (65 aa)) is disordered. Residues 102–112 (DGGSGGGGGGG) are compositionally biased toward gly residues. The homeobox DNA-binding region spans 112–171 (GTRKKLQLTKEQSTLLEDSFRVHNILSHAQKHELARQLKLKPRQVEVWFQNRRARTKLKQ). The leucine-zipper stretch occupies residues 170-214 (KQTEVDCEFLKRCCESLTEENKQLKHELMELRRLASPAAAAAGSQ).

This sequence belongs to the HD-ZIP homeobox family. Class II subfamily. As to expression, expressed in roots, leaf sheaths and blades and panicles.

It is found in the nucleus. In terms of biological role, probable transcription factor. In Oryza sativa subsp. japonica (Rice), this protein is Homeobox-leucine zipper protein HOX18 (HOX18).